Here is a 490-residue protein sequence, read N- to C-terminus: Pyridine nucleotide-disulfide oxidoreductase domain-containing protein 1 (490 aa).

Belongs to the class-I pyridine nucleotide-disulfide oxidoreductase family. PYROXD1 subfamily. FAD serves as cofactor.

The protein localises to the nucleus. Its subcellular location is the cytoplasm. It localises to the myofibril. The protein resides in the sarcomere. In terms of biological role, probable FAD-dependent oxidoreductase; involved in the cellular oxidative stress response. Required for normal sarcomere structure and muscle fiber integrity. In Danio rerio (Zebrafish), this protein is Pyridine nucleotide-disulfide oxidoreductase domain-containing protein 1 (pyroxd1).